The primary structure comprises 287 residues: D-alanine--D-alanine ligase (287 aa).

Residues 98–283 (KTKQIAQSVG…FDDVVRITVE (186 aa)) form the ATP-grasp domain. ATP is bound at residue 124–169 (PVIIKPVDEGSSKGLFLCNNKEEAEEAVKKLAKPIIEDYIIGEELT). Residues D238, E250, and N252 each contribute to the Mg(2+) site.

Belongs to the D-alanine--D-alanine ligase family. It depends on Mg(2+) as a cofactor. Mn(2+) is required as a cofactor.

It is found in the cytoplasm. The enzyme catalyses 2 D-alanine + ATP = D-alanyl-D-alanine + ADP + phosphate + H(+). The protein operates within cell wall biogenesis; peptidoglycan biosynthesis. In terms of biological role, cell wall formation. This chain is D-alanine--D-alanine ligase, found in Fusobacterium nucleatum subsp. nucleatum (strain ATCC 25586 / DSM 15643 / BCRC 10681 / CIP 101130 / JCM 8532 / KCTC 2640 / LMG 13131 / VPI 4355).